The following is a 310-amino-acid chain: N-acetyl-gamma-glutamyl-phosphate reductase (310 aa).

The active site involves Cys116.

It belongs to the NAGSA dehydrogenase family. Type 2 subfamily.

The protein resides in the cytoplasm. It catalyses the reaction N-acetyl-L-glutamate 5-semialdehyde + phosphate + NADP(+) = N-acetyl-L-glutamyl 5-phosphate + NADPH + H(+). It functions in the pathway amino-acid biosynthesis; L-arginine biosynthesis; N(2)-acetyl-L-ornithine from L-glutamate: step 3/4. Catalyzes the NADPH-dependent reduction of N-acetyl-5-glutamyl phosphate to yield N-acetyl-L-glutamate 5-semialdehyde. This is N-acetyl-gamma-glutamyl-phosphate reductase from Chelativorans sp. (strain BNC1).